The sequence spans 831 residues: Molybdenum cofactor sulfurase (831 aa).

Lys262 is modified (N6-(pyridoxal phosphate)lysine). The active site involves Cys422. In terms of domain architecture, MOSC spans 651–823; sequence AWLSEFLGKP…LSIGSHVIPK (173 aa).

Belongs to the class-V pyridoxal-phosphate-dependent aminotransferase family. MOCOS subfamily. The cofactor is pyridoxal 5'-phosphate.

The enzyme catalyses Mo-molybdopterin + L-cysteine + AH2 = thio-Mo-molybdopterin + L-alanine + A + H2O. Its pathway is cofactor biosynthesis; molybdopterin biosynthesis. Functionally, sulfurates the molybdenum cofactor. Sulfation of molybdenum is essential for xanthine dehydrogenase (XDH) and aldehyde oxidase (ADO) enzymes in which molybdenum cofactor is liganded by 1 oxygen and 1 sulfur atom in active form. This is Molybdenum cofactor sulfurase (mocos) from Danio rerio (Zebrafish).